We begin with the raw amino-acid sequence, 549 residues long: Zinc finger protein 266 (549 aa).

In terms of domain architecture, KRAB spans 1-42 (MLENYKNLATVGYQLFKPSLISWLEQEESRTVQRGDFQASEW). The C2H2-type 1; degenerate zinc-finger motif lies at 156–178 (FDCSDSGKSFINHSHLQGHLRTH). A C2H2-type 2; degenerate zinc finger spans residues 184 to 206 (HEWKECGRGFIHSTDLAVRIQTH). 12 consecutive C2H2-type zinc fingers follow at residues 212–234 (YKCK…MGTH), 240–262 (YECK…RKTH), 268–290 (YKCK…MKIH), 296–318 (YECK…LKTH), 324–346 (FECK…FRIH), 352–374 (YKCK…ARTH), 380–402 (YECK…TRTH), 408–430 (FECV…LRIH), 436–458 (FECL…MRTH), 464–486 (FTCM…MRIH), 492–514 (YKCK…ERTH), and 520–542 (YECK…ERRH). Positions 530-549 (SSSSSFRNHERRHADERLSA) are disordered.

It belongs to the krueppel C2H2-type zinc-finger protein family.

Its subcellular location is the nucleus. May be involved in transcriptional regulation. The sequence is that of Zinc finger protein 266 (ZNF266) from Homo sapiens (Human).